The primary structure comprises 210 residues: TM2 domain-containing protein C02F5.13 (210 aa).

A signal peptide spans Met-1 to Gly-18. The Extracellular segment spans residues Asn-19–Cys-138. The N-linked (GlcNAc...) asparagine glycan is linked to Asn-91. The helical transmembrane segment at Ile-139 to Val-159 threads the bilayer. The TM2 domain maps to Gly-143–Phe-191. Residues Ala-160–Thr-178 are Cytoplasmic-facing. Residues Leu-179–Gly-199 form a helical membrane-spanning segment. The Extracellular portion of the chain corresponds to Pro-200 to Tyr-210.

Belongs to the TM2 family.

It localises to the membrane. This Caenorhabditis elegans protein is TM2 domain-containing protein C02F5.13.